The following is a 20-amino-acid chain: Unknown protein from 2D-PAGE of needles (20 aa).

The protein is Unknown protein from 2D-PAGE of needles of Pinus pinaster (Maritime pine).